The chain runs to 72 residues: Protein SlyX homolog (72 aa).

The protein belongs to the SlyX family.

The polypeptide is Protein SlyX homolog (Vibrio cholerae serotype O1 (strain ATCC 39541 / Classical Ogawa 395 / O395)).